The primary structure comprises 125 residues: Phosphoribosyl-AMP cyclohydrolase (125 aa).

Asp74 is a Mg(2+) binding site. A Zn(2+)-binding site is contributed by Cys75. 2 residues coordinate Mg(2+): Asp76 and Asp78. Positions 92 and 99 each coordinate Zn(2+).

This sequence belongs to the PRA-CH family. As to quaternary structure, homodimer. It depends on Mg(2+) as a cofactor. Zn(2+) serves as cofactor.

It localises to the cytoplasm. It catalyses the reaction 1-(5-phospho-beta-D-ribosyl)-5'-AMP + H2O = 1-(5-phospho-beta-D-ribosyl)-5-[(5-phospho-beta-D-ribosylamino)methylideneamino]imidazole-4-carboxamide. It functions in the pathway amino-acid biosynthesis; L-histidine biosynthesis; L-histidine from 5-phospho-alpha-D-ribose 1-diphosphate: step 3/9. Its function is as follows. Catalyzes the hydrolysis of the adenine ring of phosphoribosyl-AMP. This is Phosphoribosyl-AMP cyclohydrolase from Desulfatibacillum aliphaticivorans.